A 176-amino-acid chain; its full sequence is MILANDELKKLISTGRLKVDPLYPDTIRENGLDLRIGGEYAIYAYEGVVIKPCELESARHLFRVVKADEVVIPPRNFALLTTEEYVKMPDDVVGFANLRSTLARYGLVIPPTIVDAGFEGNITIEVVNETPNTIVLRRGMRFLHLVLAKTEGRAQYSGLYQGQRGVTPPKGLKNEC.

Residues 99–104 (RSTLAR) and aspartate 115 contribute to the dCTP site. Residue glutamate 125 is the Proton donor/acceptor of the active site. Residue glutamine 163 participates in dCTP binding.

The protein belongs to the dCTP deaminase family. In terms of assembly, homotrimer.

The catalysed reaction is dCTP + H2O + H(+) = dUTP + NH4(+). It functions in the pathway pyrimidine metabolism; dUMP biosynthesis; dUMP from dCTP (dUTP route): step 1/2. In terms of biological role, catalyzes the deamination of dCTP to dUTP. This is dCTP deaminase from Pyrobaculum aerophilum (strain ATCC 51768 / DSM 7523 / JCM 9630 / CIP 104966 / NBRC 100827 / IM2).